The sequence spans 255 residues: Proteasome subunit alpha 2 (255 aa).

The disordered stretch occupies residues 229 to 255 (AGSSLEEMLPTPAATEDAPPANGDAPS). The span at 238 to 249 (PTPAATEDAPPA) shows a compositional bias: low complexity.

It belongs to the peptidase T1A family. In terms of assembly, the 20S proteasome core is composed of 14 alpha and 14 beta subunits that assemble into four stacked heptameric rings, resulting in a barrel-shaped structure. The two inner rings, each composed of seven catalytic beta subunits, are sandwiched by two outer rings, each composed of seven alpha subunits. All four combinations of alpha- and beta-subunits (beta2-alpha1, beta2-alpha2, beta1-alpha2 and beta1-alpha1) yield fully assembled and proteolytically active proteasomes. The catalytic chamber with the active sites is on the inside of the barrel. Has probably a gated structure, the ends of the cylinder being occluded by the N-termini of the alpha-subunits. Is likely capped by the proteasome-associated ATPase, ARC. Post-translationally, the N-terminus is blocked.

The protein resides in the cytoplasm. Its pathway is protein degradation; proteasomal Pup-dependent pathway. With respect to regulation, the formation of the proteasomal ATPase ARC-20S proteasome complex, likely via the docking of the C-termini of ARC into the intersubunit pockets in the alpha-rings, may trigger opening of the gate for substrate entry. Interconversion between the open-gate and close-gate conformations leads to a dynamic regulation of the 20S proteasome proteolysis activity. In terms of biological role, component of the proteasome core, a large protease complex with broad specificity involved in protein degradation. The R.erythropolis proteasomes are able to cleave oligopeptides after Tyr, Phe and Leu, very poorly after Arg but not after Glu. Thus, displays chymotrypsin-like activity, low trypsin-like activity but no caspase-like activity. The chain is Proteasome subunit alpha 2 from Rhodococcus erythropolis (Arthrobacter picolinophilus).